Reading from the N-terminus, the 162-residue chain is UPF0178 protein Rsph17029_2512 (162 aa).

This sequence belongs to the UPF0178 family.

This chain is UPF0178 protein Rsph17029_2512, found in Cereibacter sphaeroides (strain ATCC 17029 / ATH 2.4.9) (Rhodobacter sphaeroides).